The sequence spans 383 residues: uncharacterized protein (383 aa).

Disordered stretches follow at residues 1–30 (MDLCQKNETDLENGENNEIQSTEETEPTCT), 114–144 (ETKPPTEGGPEKDQSSPSQTQAAPQGPSTAS), 262–289 (GEKRPSELAKHTVVNDTPSSPSPAARTS), and 341–360 (AKDPRPPVITQKAKQENSPQ). The segment covering 10–26 (DLENGENNEIQSTEETE) has biased composition (acidic residues). Low complexity predominate over residues 128–141 (SSPSQTQAAPQGPS). Residues 262–271 (GEKRPSELAK) are compositionally biased toward basic and acidic residues.

This is an uncharacterized protein from Macaca fascicularis (Crab-eating macaque).